A 117-amino-acid chain; its full sequence is UPF0342 protein BLi01058/BL02870 (117 aa).

Belongs to the UPF0342 family.

The chain is UPF0342 protein BLi01058/BL02870 from Bacillus licheniformis (strain ATCC 14580 / DSM 13 / JCM 2505 / CCUG 7422 / NBRC 12200 / NCIMB 9375 / NCTC 10341 / NRRL NRS-1264 / Gibson 46).